Consider the following 154-residue polypeptide: Myoglobin (154 aa).

Positions 2–148 constitute a Globin domain; it reads VLTDAEWHLV…FRKDIAAKYK (147 aa). His65 contacts nitrite. His65 provides a ligand contact to O2. Thr68 is modified (phosphothreonine). A heme b-binding site is contributed by His94.

This sequence belongs to the globin family. In terms of assembly, monomeric.

It is found in the cytoplasm. Its subcellular location is the sarcoplasm. It carries out the reaction Fe(III)-heme b-[protein] + nitric oxide + H2O = Fe(II)-heme b-[protein] + nitrite + 2 H(+). The enzyme catalyses H2O2 + AH2 = A + 2 H2O. Its function is as follows. Monomeric heme protein which primary function is to store oxygen and facilitate its diffusion within muscle tissues. Reversibly binds oxygen through a pentacoordinated heme iron and enables its timely and efficient release as needed during periods of heightened demand. Depending on the oxidative conditions of tissues and cells, and in addition to its ability to bind oxygen, it also has a nitrite reductase activity whereby it regulates the production of bioactive nitric oxide. Under stress conditions, like hypoxia and anoxia, it also protects cells against reactive oxygen species thanks to its pseudoperoxidase activity. This chain is Myoglobin (MB), found in Balaenoptera physalus (Fin whale).